The chain runs to 516 residues: Histidine ammonia-lyase 1 (516 aa).

A cross-link (5-imidazolinone (Ser-Gly)) is located at residues 147-149 (SSG). Position 148 is a 2,3-didehydroalanine (Ser) (Ser-148).

The protein belongs to the PAL/histidase family. In terms of processing, contains an active site 4-methylidene-imidazol-5-one (MIO), which is formed autocatalytically by cyclization and dehydration of residues Ser-Ser-Gly.

The protein localises to the cytoplasm. It carries out the reaction L-histidine = trans-urocanate + NH4(+). Its pathway is amino-acid degradation; L-histidine degradation into L-glutamate; N-formimidoyl-L-glutamate from L-histidine: step 1/3. The polypeptide is Histidine ammonia-lyase 1 (hutH1) (Fusobacterium nucleatum subsp. nucleatum (strain ATCC 25586 / DSM 15643 / BCRC 10681 / CIP 101130 / JCM 8532 / KCTC 2640 / LMG 13131 / VPI 4355)).